The primary structure comprises 187 residues: dTTP/UTP pyrophosphatase (187 aa).

The Proton acceptor role is filled by Asp-65.

It belongs to the Maf family. YhdE subfamily. A divalent metal cation is required as a cofactor.

It localises to the cytoplasm. It carries out the reaction dTTP + H2O = dTMP + diphosphate + H(+). It catalyses the reaction UTP + H2O = UMP + diphosphate + H(+). Its function is as follows. Nucleoside triphosphate pyrophosphatase that hydrolyzes dTTP and UTP. May have a dual role in cell division arrest and in preventing the incorporation of modified nucleotides into cellular nucleic acids. This Deinococcus geothermalis (strain DSM 11300 / CIP 105573 / AG-3a) protein is dTTP/UTP pyrophosphatase.